The following is a 958-amino-acid chain: Eukaryotic translation initiation factor 3 subunit A (958 aa).

Residues 93–123 are a coiled coil; that stretch reads MHLATERAELARNQAQALEEALDVEDLEADK. Residues 316–513 form the PCI domain; that stretch reads LQLIASSVVL…GLSSLVNRVL (198 aa). Coiled coils occupy residues 548-696 and 796-861; these read EALS…AKRE and LRSE…LRKS. The segment covering 804–859 has biased composition (basic and acidic residues); it reads KRLQEEEEARKREEAERRKKEEAERQAKLDEIAEKQRRRMLELEEKEKREREEILR. The segment at 804–958 is disordered; the sequence is KRLQEEEEAR…SRTSWPASRR (155 aa). Over residues 877 to 894 the composition is skewed to low complexity; it reads PAELGGAAPIPAAAATAP. Basic and acidic residues predominate over residues 929-942; it reads KPDDRPSWRDERKP. The span at 946–958 shows a compositional bias: polar residues; sequence GSGSRTSWPASRR.

Belongs to the eIF-3 subunit A family. Component of the eukaryotic translation initiation factor 3 (eIF-3) complex.

It localises to the cytoplasm. Its function is as follows. RNA-binding component of the eukaryotic translation initiation factor 3 (eIF-3) complex, which is involved in protein synthesis of a specialized repertoire of mRNAs and, together with other initiation factors, stimulates binding of mRNA and methionyl-tRNAi to the 40S ribosome. The eIF-3 complex specifically targets and initiates translation of a subset of mRNAs involved in cell proliferation. In Nicotiana tabacum (Common tobacco), this protein is Eukaryotic translation initiation factor 3 subunit A (TIF3A1).